Consider the following 199-residue polypeptide: Shikimate kinase (199 aa).

34–39 is a binding site for ATP; the sequence is GAGKTA. Threonine 38 contacts Mg(2+). Substrate contacts are provided by aspartate 56, arginine 80, and glycine 102. Position 140 (arginine 140) interacts with ATP. A substrate-binding site is contributed by arginine 159.

This sequence belongs to the shikimate kinase family. Monomer. Requires Mg(2+) as cofactor.

The protein resides in the cytoplasm. The catalysed reaction is shikimate + ATP = 3-phosphoshikimate + ADP + H(+). It functions in the pathway metabolic intermediate biosynthesis; chorismate biosynthesis; chorismate from D-erythrose 4-phosphate and phosphoenolpyruvate: step 5/7. Functionally, catalyzes the specific phosphorylation of the 3-hydroxyl group of shikimic acid using ATP as a cosubstrate. In Cereibacter sphaeroides (strain ATCC 17023 / DSM 158 / JCM 6121 / CCUG 31486 / LMG 2827 / NBRC 12203 / NCIMB 8253 / ATH 2.4.1.) (Rhodobacter sphaeroides), this protein is Shikimate kinase.